Here is a 300-residue protein sequence, read N- to C-terminus: Sodium/potassium/calcium exchanger 1 (300 aa).

Residues 1 to 251 (DPGSQGVGAE…ENEQPLSLEW (251 aa)) are disordered. 5 stretches are compositionally biased toward acidic residues: residues 92 to 102 (GEVEGDEDEGE), 109 to 119 (GEVEGDEDEGE), 126 to 136 (GEVEGDEDEGE), 158 to 175 (GEVEGEDGEVEGGEDEGE), and 215 to 244 (GDSEDEEEEDEEEDEEEEEEEEEEEEEENE). The helical transmembrane segment at 259 to 275 (AIYLFLLPIVFPLWLTV) threads the bilayer.

It belongs to the Ca(2+):cation antiporter (CaCA) (TC 2.A.19) family. SLC24A subfamily. In terms of processing, the uncleaved signal sequence is required for efficient membrane targeting and proper membrane integration and topology.

The protein localises to the cell membrane. It carries out the reaction Ca(2+)(out) + K(+)(out) + 4 Na(+)(in) = Ca(2+)(in) + K(+)(in) + 4 Na(+)(out). Functionally, calcium, potassium:sodium antiporter that transports 1 Ca(2+) and 1 K(+) in exchange for 4 Na(+). Critical component of the visual transduction cascade, controlling the calcium concentration of outer segments during light and darkness. Light causes a rapid lowering of cytosolic free calcium in the outer segment of both retinal rod and cone photoreceptors and the light-induced lowering of calcium is caused by extrusion via this protein which plays a key role in the process of light adaptation. The polypeptide is Sodium/potassium/calcium exchanger 1 (SLC24A1) (Bison bison (American bison)).